The sequence spans 350 residues: Serine/threonine-protein kinase SRK2F (350 aa).

Residues 4-260 (YDILRDLGSG…VPEIEKHPWF (257 aa)) enclose the Protein kinase domain. Residues 10-18 (LGSGNFGVA) and Lys33 contribute to the ATP site. Residue Asp123 is the Proton acceptor of the active site. A coiled-coil region spans residues 270-303 (EEEKCDNGVEEEEEEEEKCRQSVEEIVKIIEEAR).

The protein belongs to the protein kinase superfamily. Ser/Thr protein kinase family. Expressed in seedlings.

It catalyses the reaction L-seryl-[protein] + ATP = O-phospho-L-seryl-[protein] + ADP + H(+). It carries out the reaction L-threonyl-[protein] + ATP = O-phospho-L-threonyl-[protein] + ADP + H(+). This is Serine/threonine-protein kinase SRK2F (SRK2F) from Arabidopsis thaliana (Mouse-ear cress).